A 131-amino-acid chain; its full sequence is D-ribose pyranase (131 aa).

H20 acts as the Proton donor in catalysis. Residues D28, H98, and 120 to 122 (YAN) each bind substrate.

Belongs to the RbsD / FucU family. RbsD subfamily. As to quaternary structure, homodecamer.

It is found in the cytoplasm. It carries out the reaction beta-D-ribopyranose = beta-D-ribofuranose. It participates in carbohydrate metabolism; D-ribose degradation; D-ribose 5-phosphate from beta-D-ribopyranose: step 1/2. Catalyzes the interconversion of beta-pyran and beta-furan forms of D-ribose. In Bacillus cereus (strain ZK / E33L), this protein is D-ribose pyranase.